The sequence spans 482 residues: tRNA sulfurtransferase (482 aa).

The THUMP domain maps to 61-165 (KETLEVLTQT…NDKLNQVIER (105 aa)). ATP-binding positions include 183 to 184 (LI), lysine 265, glycine 287, and glutamine 296. A disulfide bridge connects residues cysteine 344 and cysteine 456. One can recognise a Rhodanese domain in the interval 404 to 482 (VAEHAVVLDI…GFHNVKVYRP (79 aa)). Catalysis depends on cysteine 456, which acts as the Cysteine persulfide intermediate.

Belongs to the ThiI family.

Its subcellular location is the cytoplasm. It catalyses the reaction [ThiI sulfur-carrier protein]-S-sulfanyl-L-cysteine + a uridine in tRNA + 2 reduced [2Fe-2S]-[ferredoxin] + ATP + H(+) = [ThiI sulfur-carrier protein]-L-cysteine + a 4-thiouridine in tRNA + 2 oxidized [2Fe-2S]-[ferredoxin] + AMP + diphosphate. It carries out the reaction [ThiS sulfur-carrier protein]-C-terminal Gly-Gly-AMP + S-sulfanyl-L-cysteinyl-[cysteine desulfurase] + AH2 = [ThiS sulfur-carrier protein]-C-terminal-Gly-aminoethanethioate + L-cysteinyl-[cysteine desulfurase] + A + AMP + 2 H(+). It functions in the pathway cofactor biosynthesis; thiamine diphosphate biosynthesis. Its function is as follows. Catalyzes the ATP-dependent transfer of a sulfur to tRNA to produce 4-thiouridine in position 8 of tRNAs, which functions as a near-UV photosensor. Also catalyzes the transfer of sulfur to the sulfur carrier protein ThiS, forming ThiS-thiocarboxylate. This is a step in the synthesis of thiazole, in the thiamine biosynthesis pathway. The sulfur is donated as persulfide by IscS. The protein is tRNA sulfurtransferase of Vibrio atlanticus (strain LGP32) (Vibrio splendidus (strain Mel32)).